Reading from the N-terminus, the 39-residue chain is Photosystem II reaction center protein I (39 aa).

Residues 6–26 (ISVYSVVFFFIGIFMFGFLAS) traverse the membrane as a helical segment.

Belongs to the PsbI family. As to quaternary structure, PSII is composed of 1 copy each of membrane proteins PsbA, PsbB, PsbC, PsbD, PsbE, PsbF, PsbH, PsbI, PsbJ, PsbK, PsbL, PsbM, PsbT, PsbX, PsbY, PsbZ, Psb30/Ycf12, peripheral proteins PsbO, CyanoQ (PsbQ), PsbU, PsbV and a large number of cofactors. It forms dimeric complexes.

The protein localises to the cellular thylakoid membrane. In terms of biological role, one of the components of the core complex of photosystem II (PSII), required for its stability and/or assembly. PSII is a light-driven water:plastoquinone oxidoreductase that uses light energy to abstract electrons from H(2)O, generating O(2) and a proton gradient subsequently used for ATP formation. It consists of a core antenna complex that captures photons, and an electron transfer chain that converts photonic excitation into a charge separation. This Synechococcus sp. (strain RCC307) protein is Photosystem II reaction center protein I.